Reading from the N-terminus, the 471-residue chain is tRNA-2-methylthio-N(6)-dimethylallyladenosine synthase (471 aa).

Positions 33–151 (KKYMITTYGC…FPELLSRSME (119 aa)) constitute an MTTase N-terminal domain. The [4Fe-4S] cluster site is built by C42, C78, C112, C188, C192, and C195. Residues 174–404 (RKYDLKGFIN…LDKVNEISAE (231 aa)) enclose the Radical SAM core domain. The TRAM domain occupies 407-470 (QSYLNKVVEV…TFSLNGEVIQ (64 aa)).

The protein belongs to the methylthiotransferase family. MiaB subfamily. Monomer. [4Fe-4S] cluster serves as cofactor.

The protein resides in the cytoplasm. The enzyme catalyses N(6)-dimethylallyladenosine(37) in tRNA + (sulfur carrier)-SH + AH2 + 2 S-adenosyl-L-methionine = 2-methylsulfanyl-N(6)-dimethylallyladenosine(37) in tRNA + (sulfur carrier)-H + 5'-deoxyadenosine + L-methionine + A + S-adenosyl-L-homocysteine + 2 H(+). Functionally, catalyzes the methylthiolation of N6-(dimethylallyl)adenosine (i(6)A), leading to the formation of 2-methylthio-N6-(dimethylallyl)adenosine (ms(2)i(6)A) at position 37 in tRNAs that read codons beginning with uridine. This chain is tRNA-2-methylthio-N(6)-dimethylallyladenosine synthase, found in Alkaliphilus oremlandii (strain OhILAs) (Clostridium oremlandii (strain OhILAs)).